The following is a 425-amino-acid chain: MLDLKKLRSNTEEVKKALSNRGEDFDVNVIDEVIALDEERRKILVDVEALKKQRNEVSAEIPKRKKAGEDVTEVMAEMREIGGKIKADDAKVAELNDKINYIMLRIPNIPNPAVPEGETDEDNVEIKRWGEPTKFNFEPKAHWDLGTDLDLLDFERGGKVAGSRFTVYKGMGARLERSIINYFLDKHTFENGYTEVLPPYMVNRDSMTGTGQLPKFEEDAFKVENNGYFLIPTAEVPVTNMYRNETLEGDKLPIKHAAYSACFRAEAGSAGRDTRGLIRQHQFNKVELVKFCKPEQSYEELDKLVQDAESVLQGLGLPYRIVRICKGDLGFTAALKYDIEVWMPSYNRYVEISSCSNFEDFQARRANIKYKNSPKEKPQFVHTLNGSGVAIGRTVAAILENYQQEDGSVVIPEALKEYMRCDLLK.

233–235 serves as a coordination point for L-serine; that stretch reads TAE. An ATP-binding site is contributed by 264 to 266; that stretch reads RAE. L-serine is bound at residue Glu-287. 351–354 is a binding site for ATP; sequence EISS. Ser-387 is a binding site for L-serine.

This sequence belongs to the class-II aminoacyl-tRNA synthetase family. Type-1 seryl-tRNA synthetase subfamily. As to quaternary structure, homodimer. The tRNA molecule binds across the dimer.

The protein localises to the cytoplasm. It carries out the reaction tRNA(Ser) + L-serine + ATP = L-seryl-tRNA(Ser) + AMP + diphosphate + H(+). It catalyses the reaction tRNA(Sec) + L-serine + ATP = L-seryl-tRNA(Sec) + AMP + diphosphate + H(+). The protein operates within aminoacyl-tRNA biosynthesis; selenocysteinyl-tRNA(Sec) biosynthesis; L-seryl-tRNA(Sec) from L-serine and tRNA(Sec): step 1/1. Functionally, catalyzes the attachment of serine to tRNA(Ser). Is also able to aminoacylate tRNA(Sec) with serine, to form the misacylated tRNA L-seryl-tRNA(Sec), which will be further converted into selenocysteinyl-tRNA(Sec). The chain is Serine--tRNA ligase from Clostridium perfringens (strain ATCC 13124 / DSM 756 / JCM 1290 / NCIMB 6125 / NCTC 8237 / Type A).